The chain runs to 559 residues: DNA primase (559 aa).

The CHC2-type zinc-finger motif lies at 37–61 (CPFHEERSASFSVNQIKGFYHCFGC). A Toprim domain is found at 246–327 (KQVIVTEGYL…RGGVILFENN (82 aa)). Mg(2+) is bound by residues Glu-252, Asp-296, and Asp-298.

The protein belongs to the DnaG primase family. Monomer. The C-terminal domain DnaB-binding domain exists as a dimer in solution. Interacts with DnaB via its C-terminal domain (residues 415-559 of DnaG); up to 3 DnaG fragments bind to a DnaB hexamer. The cofactor is Zn(2+). Mg(2+) serves as cofactor.

The enzyme catalyses ssDNA + n NTP = ssDNA/pppN(pN)n-1 hybrid + (n-1) diphosphate.. Its function is as follows. RNA polymerase that catalyzes the synthesis of short RNA molecules used as primers for DNA polymerase during DNA replication. Stimulates the 5'-3' DNA helicase activity of DnaB. The protein is DNA primase of Helicobacter pylori (strain ATCC 700392 / 26695) (Campylobacter pylori).